The chain runs to 361 residues: Histidinol-phosphate aminotransferase (361 aa).

Lys221 bears the N6-(pyridoxal phosphate)lysine mark.

The protein belongs to the class-II pyridoxal-phosphate-dependent aminotransferase family. Histidinol-phosphate aminotransferase subfamily. The cofactor is pyridoxal 5'-phosphate.

The enzyme catalyses L-histidinol phosphate + 2-oxoglutarate = 3-(imidazol-4-yl)-2-oxopropyl phosphate + L-glutamate. It participates in amino-acid biosynthesis; L-histidine biosynthesis; L-histidine from 5-phospho-alpha-D-ribose 1-diphosphate: step 7/9. The protein is Histidinol-phosphate aminotransferase of Methanocella arvoryzae (strain DSM 22066 / NBRC 105507 / MRE50).